A 394-amino-acid chain; its full sequence is Tubulin-like protein CetZ5 (394 aa).

GTP contacts are provided by residues 10–14, 110–112, Glu-142, Asn-169, and Asn-187; these read QAGGN and GTG.

Belongs to the CetZ family.

The protein localises to the cytoplasm. In terms of biological role, involved in cell shape control. The chain is Tubulin-like protein CetZ5 from Haloferax volcanii (strain ATCC 29605 / DSM 3757 / JCM 8879 / NBRC 14742 / NCIMB 2012 / VKM B-1768 / DS2) (Halobacterium volcanii).